Consider the following 265-residue polypeptide: Tryptophan 2,3-dioxygenase (265 aa).

Substrate is bound by residues 38–42 and Arg104; that span reads FIVVH. His223 lines the heme pocket. Position 237 (Thr237) interacts with substrate.

This sequence belongs to the tryptophan 2,3-dioxygenase family. In terms of assembly, homotetramer. It depends on heme as a cofactor.

The catalysed reaction is L-tryptophan + O2 = N-formyl-L-kynurenine. Its pathway is amino-acid degradation; L-tryptophan degradation via kynurenine pathway; L-kynurenine from L-tryptophan: step 1/2. Functionally, heme-dependent dioxygenase that catalyzes the oxidative cleavage of the L-tryptophan (L-Trp) pyrrole ring and converts L-tryptophan to N-formyl-L-kynurenine. Catalyzes the oxidative cleavage of the indole moiety. This chain is Tryptophan 2,3-dioxygenase, found in Anaeromyxobacter sp. (strain K).